The primary structure comprises 126 residues: Small ribosomal subunit protein uS12 (126 aa).

The tract at residues 1–28 (MPTIQQLIRSERSKVQKKTKSPALKQCP) is disordered. Asp89 is subject to 3-methylthioaspartic acid. The segment at 104 to 126 (ATGVKDRKQGRSKYGTKREKAKK) is disordered. The segment covering 113–126 (GRSKYGTKREKAKK) has biased composition (basic residues).

The protein belongs to the universal ribosomal protein uS12 family. As to quaternary structure, part of the 30S ribosomal subunit. Contacts proteins S8 and S17. May interact with IF1 in the 30S initiation complex.

With S4 and S5 plays an important role in translational accuracy. Functionally, interacts with and stabilizes bases of the 16S rRNA that are involved in tRNA selection in the A site and with the mRNA backbone. Located at the interface of the 30S and 50S subunits, it traverses the body of the 30S subunit contacting proteins on the other side and probably holding the rRNA structure together. The combined cluster of proteins S8, S12 and S17 appears to hold together the shoulder and platform of the 30S subunit. The sequence is that of Small ribosomal subunit protein uS12 from Synechocystis sp. (strain ATCC 27184 / PCC 6803 / Kazusa).